A 238-amino-acid polypeptide reads, in one-letter code: Ribitol-5-phosphate cytidylyltransferase (238 aa).

Residues 7 to 10 (FAGG) and 80 to 86 (GETGQES) each bind CTP.

Belongs to the IspD/TarI cytidylyltransferase family. TarI subfamily.

The enzyme catalyses D-ribitol 5-phosphate + CTP + H(+) = CDP-L-ribitol + diphosphate. Catalyzes the transfer of the cytidylyl group of CTP to D-ribitol 5-phosphate. In Vibrio parahaemolyticus serotype O3:K6 (strain RIMD 2210633), this protein is Ribitol-5-phosphate cytidylyltransferase.